A 316-amino-acid polypeptide reads, in one-letter code: Biotin synthase (316 aa).

A Radical SAM core domain is found at 39-263 (NAIQCSTLLS…LFPKAYVRLS (225 aa)). [4Fe-4S] cluster is bound by residues Cys54, Cys58, and Cys61. Residues Cys98, Cys129, Cys189, and Arg261 each coordinate [2Fe-2S] cluster.

This sequence belongs to the radical SAM superfamily. Biotin synthase family. Homodimer. Requires [4Fe-4S] cluster as cofactor. The cofactor is [2Fe-2S] cluster.

The catalysed reaction is (4R,5S)-dethiobiotin + (sulfur carrier)-SH + 2 reduced [2Fe-2S]-[ferredoxin] + 2 S-adenosyl-L-methionine = (sulfur carrier)-H + biotin + 2 5'-deoxyadenosine + 2 L-methionine + 2 oxidized [2Fe-2S]-[ferredoxin]. The protein operates within cofactor biosynthesis; biotin biosynthesis; biotin from 7,8-diaminononanoate: step 2/2. Its function is as follows. Catalyzes the conversion of dethiobiotin (DTB) to biotin by the insertion of a sulfur atom into dethiobiotin via a radical-based mechanism. This Acidithiobacillus ferrooxidans (strain ATCC 23270 / DSM 14882 / CIP 104768 / NCIMB 8455) (Ferrobacillus ferrooxidans (strain ATCC 23270)) protein is Biotin synthase.